A 393-amino-acid polypeptide reads, in one-letter code: S-adenosylmethionine synthase 1 (393 aa).

Residue Glu-9 coordinates Mg(2+). His-15 provides a ligand contact to ATP. K(+) is bound at residue Glu-43. L-methionine contacts are provided by Glu-56 and Gln-99. Cys-114 carries the post-translational modification S-nitrosocysteine. Residues 167–169, 235–238, Asp-246, 252–253, Ala-269, Lys-273, and Lys-277 contribute to the ATP site; these read DGK, SGRF, and RK. Residue Asp-246 participates in L-methionine binding. Lys-277 serves as a coordination point for L-methionine.

This sequence belongs to the AdoMet synthase family. As to quaternary structure, homotetramer. Interacts with GRF3. It depends on Mn(2+) as a cofactor. Mg(2+) is required as a cofactor. The cofactor is Co(2+). K(+) serves as cofactor. In terms of processing, S-nitrosylated in the presence of NO. The inhibition of SAM1 activity by S-nitrosylation could contribute to the cross-talk between ethylene and NO signaling. As to expression, highly expressed in stems and roots.

Its subcellular location is the cytoplasm. The enzyme catalyses L-methionine + ATP + H2O = S-adenosyl-L-methionine + phosphate + diphosphate. Its pathway is amino-acid biosynthesis; S-adenosyl-L-methionine biosynthesis; S-adenosyl-L-methionine from L-methionine: step 1/1. Reversibly inhibited by NO. Inhibited by 5,5'-dithiobis-2-nitrobenzoic acid (DTNB) and N-ethylmaleimide (NEM) (in vitro). Catalyzes the formation of S-adenosylmethionine from methionine and ATP. The reaction comprises two steps that are both catalyzed by the same enzyme: formation of S-adenosylmethionine (AdoMet) and triphosphate, and subsequent hydrolysis of the triphosphate. This Arabidopsis thaliana (Mouse-ear cress) protein is S-adenosylmethionine synthase 1 (SAM1).